A 90-amino-acid chain; its full sequence is Protein LURE 1.4 (90 aa).

The first 19 residues, 1–19, serve as a signal peptide directing secretion; the sequence is MKCPSIFLTLLIFVSSCTS. A glycan (N-linked (GlcNAc...) asparagine) is linked at asparagine 23. 3 cysteine pairs are disulfide-bonded: cysteine 58–cysteine 75, cysteine 61–cysteine 82, and cysteine 65–cysteine 84. A PRK6 binding region spans residues 67-87; that stretch reads RRGKYIRTCSFERKLCRCSIS.

It belongs to the DEFL family. Binds to PRK6 LRRs. Expressed in the pistil. Detected exclusively in the synergid cells.

The protein localises to the secreted. In terms of biological role, pollen tube attractants guiding pollen tubes to the ovular micropyle. The sequence is that of Protein LURE 1.4 from Arabidopsis thaliana (Mouse-ear cress).